The sequence spans 817 residues: MYGVCGCCGALRPRYKRLVDNIFPEDPEDGLVKTNMEKLTFYALSAPEKLDRIGAYLSERLIRDVGRHRYGYVCIAMEALDQLLMACHCQSINLFVESFLKMVAKLLESEKPNLQILGTNSFVKFANIEEDTPSYHRSYDFFVSRFSEMCHSSHDDLEIKTKIRMSGIKGLQGVVRKTVNDELQANIWDPQHMDKIVPSLLFNLQHVEEAESRSPSPLQAPEKEKENPAELAERCLRELLGRAAFGNIKNAIKPVLIHLDNHSLWEPKVFATRCFKIIMYSIQPQHSHLVIQQLLSHLDANSRSAATVRAGIVEVLSEAAIIAATGSVGPTVLEMFNTLLRQLRLSIDYALTGSYDGAVSLGSKIIKEHEECMFQEAVIKTIGSFASTLPTYQRSEVILFIMSKVPLPSVHHPVETGRTGENRNRLTQIMLLKSLLQVSTGFQCNNMMSALPSNFLDRLLSTALMEDAEIRLFVLEILISFIDRHGNRHKFSTISTLGDISVLKLKVDKCSRQDTVFMKKHSQQLYRHIYLSCKEETNIQKHYEALYGLLALISIELANEEVVVDLIRLVLAVQDVAQVNEENLPTYNRCALYALGAAYLNLISQLTTVPAFCQHIHEVIETRKKEAPYMLPEDVFVEKPRLSQNLDGVVIEFLFRQSKISEVLGGSGYNSDRLCLPYIPQLTDEDRLSKRKSIGETISLQVEVESRNSPEKEERVPAEEITYETLKKAIVDSVAVEEQERERQRQVVEKFQKAPFEEIAAHCGARASLLQSKLNQIFEITIRPPPSPSGTISAAYGQPQNHSIPVYEMKFPDLCVY.

Phosphoserine occurs at positions 212, 214, and 216.

The protein belongs to the EFR3 family. Component of a phosphatidylinositol 4-kinase (PI4K) complex, composed of PI4KA, EFR3 (EFR3A or EFR3B), TTC7 (TTC7A or TTC7B) and HYCC (HYCC1 or HYCC2). In terms of processing, palmitoylated at its N-terminus, anchoring the protein to the plasma membrane. Widely expressed.

It localises to the cell membrane. Its subcellular location is the cytoplasm. The protein resides in the cytosol. Component of a complex required to localize phosphatidylinositol 4-kinase (PI4K) to the plasma membrane. The complex acts as a regulator of phosphatidylinositol 4-phosphate (PtdIns(4)P) synthesis. In the complex, EFR3B probably acts as the membrane-anchoring component. Also involved in responsiveness to G-protein-coupled receptors; it is however unclear whether this role is direct or indirect. The sequence is that of Protein EFR3 homolog B (Efr3b) from Mus musculus (Mouse).